Reading from the N-terminus, the 449-residue chain is Xylose isomerase (449 aa).

Catalysis depends on residues His103 and Asp106. Mg(2+) is bound by residues Glu234, Glu270, His273, Asp298, Asp309, Asp311, and Asp342.

It belongs to the xylose isomerase family. Homotetramer. It depends on Mg(2+) as a cofactor.

It is found in the cytoplasm. It catalyses the reaction alpha-D-xylose = alpha-D-xylulofuranose. Its function is as follows. Involved in D-xylose catabolism. The chain is Xylose isomerase (xylA) from Lactiplantibacillus pentosus (Lactobacillus pentosus).